The sequence spans 265 residues: Acetylglutamate kinase (265 aa).

Substrate contacts are provided by residues 41 to 42, R63, and N156; that span reads GG.

The protein belongs to the acetylglutamate kinase family. ArgB subfamily.

Its subcellular location is the cytoplasm. It carries out the reaction N-acetyl-L-glutamate + ATP = N-acetyl-L-glutamyl 5-phosphate + ADP. Its pathway is amino-acid biosynthesis; L-arginine biosynthesis; N(2)-acetyl-L-ornithine from L-glutamate: step 2/4. Catalyzes the ATP-dependent phosphorylation of N-acetyl-L-glutamate. This is Acetylglutamate kinase from Oceanobacillus iheyensis (strain DSM 14371 / CIP 107618 / JCM 11309 / KCTC 3954 / HTE831).